Reading from the N-terminus, the 347-residue chain is Phenylalanine--tRNA ligase alpha subunit (347 aa).

A Mg(2+)-binding site is contributed by Glu-261.

The protein belongs to the class-II aminoacyl-tRNA synthetase family. Phe-tRNA synthetase alpha subunit type 1 subfamily. Tetramer of two alpha and two beta subunits. Mg(2+) is required as a cofactor.

The protein localises to the cytoplasm. It carries out the reaction tRNA(Phe) + L-phenylalanine + ATP = L-phenylalanyl-tRNA(Phe) + AMP + diphosphate + H(+). In Streptococcus pyogenes serotype M18 (strain MGAS8232), this protein is Phenylalanine--tRNA ligase alpha subunit.